A 254-amino-acid polypeptide reads, in one-letter code: 3-dehydroquinate dehydratase (254 aa).

3-dehydroquinate is bound by residues 47 to 49 and Arg-83; that span reads EFR. Residue His-144 is the Proton donor/acceptor of the active site. Residue Lys-171 is the Schiff-base intermediate with substrate of the active site. The 3-dehydroquinate site is built by Arg-213, Ser-232, and Gln-236.

This sequence belongs to the type-I 3-dehydroquinase family. As to quaternary structure, homodimer.

The catalysed reaction is 3-dehydroquinate = 3-dehydroshikimate + H2O. It functions in the pathway metabolic intermediate biosynthesis; chorismate biosynthesis; chorismate from D-erythrose 4-phosphate and phosphoenolpyruvate: step 3/7. Its function is as follows. Involved in the third step of the chorismate pathway, which leads to the biosynthesis of aromatic amino acids. Catalyzes the cis-dehydration of 3-dehydroquinate (DHQ) and introduces the first double bond of the aromatic ring to yield 3-dehydroshikimate. The sequence is that of 3-dehydroquinate dehydratase from Neisseria meningitidis serogroup B (strain ATCC BAA-335 / MC58).